The primary structure comprises 65 residues: uncharacterized protein (65 aa).

The disordered stretch occupies residues 24–65 (NNNNNNNNNNNNNNNNNNNNNNNNNNNNNNNKNNKNNNKNND).

This is an uncharacterized protein from Dictyostelium discoideum (Social amoeba).